Consider the following 164-residue polypeptide: Ecotin (164 aa).

Residues M1 to A20 form the signal peptide. C72 and C109 are disulfide-bonded.

The protein belongs to the protease inhibitor I11 (ecotin) family. Homodimer.

The protein localises to the periplasm. Its function is as follows. General inhibitor of pancreatic serine proteases: inhibits chymotrypsin, trypsin, elastases, factor X, kallikrein as well as a variety of other proteases. This chain is Ecotin, found in Salmonella enteritidis PT4 (strain P125109).